The sequence spans 138 residues: Nucleoside diphosphate kinase (138 aa).

ATP is bound by residues Lys9, Phe57, Arg85, Thr91, Arg102, and Asn112. The active-site Pros-phosphohistidine intermediate is His115.

Belongs to the NDK family. Mg(2+) serves as cofactor.

It localises to the cytoplasm. It catalyses the reaction a 2'-deoxyribonucleoside 5'-diphosphate + ATP = a 2'-deoxyribonucleoside 5'-triphosphate + ADP. It carries out the reaction a ribonucleoside 5'-diphosphate + ATP = a ribonucleoside 5'-triphosphate + ADP. In terms of biological role, major role in the synthesis of nucleoside triphosphates other than ATP. The ATP gamma phosphate is transferred to the NDP beta phosphate via a ping-pong mechanism, using a phosphorylated active-site intermediate. The chain is Nucleoside diphosphate kinase from Picrophilus torridus (strain ATCC 700027 / DSM 9790 / JCM 10055 / NBRC 100828 / KAW 2/3).